The sequence spans 529 residues: uncharacterized protein (529 aa).

A disordered region spans residues 1–20 (MGADLKQPQDADSPPKGVSR). The segment at residues 1 to 52 (MGADLKQPQDADSPPKGVSRRRFLTTGAAAVVGTGVGAGGTALLSSHPRGPA) is a signal peptide (tat-type signal).

Post-translationally, predicted to be exported by the Tat system. The position of the signal peptide cleavage has not been experimentally proven.

This is an uncharacterized protein from Mycobacterium tuberculosis (strain CDC 1551 / Oshkosh).